We begin with the raw amino-acid sequence, 134 residues long: Small ribosomal subunit protein uS12 (134 aa).

The tract at residues 1-26 is disordered; the sequence is MPTIQQLVRKGRESFADKSKSPALNS. Residues 10–20 show a composition bias toward basic and acidic residues; that stretch reads KGRESFADKSK. Aspartate 89 carries the post-translational modification 3-methylthioaspartic acid. The tract at residues 103 to 134 is disordered; it reads DTAGVNGRTQRRSKYGAKRPKPGQAPAAKGKK. Over residues 111-123 the composition is skewed to basic residues; it reads TQRRSKYGAKRPK. Residues 124-134 show a composition bias toward low complexity; sequence PGQAPAAKGKK.

The protein belongs to the universal ribosomal protein uS12 family. As to quaternary structure, part of the 30S ribosomal subunit. Contacts proteins S8 and S17. May interact with IF1 in the 30S initiation complex.

In terms of biological role, with S4 and S5 plays an important role in translational accuracy. Interacts with and stabilizes bases of the 16S rRNA that are involved in tRNA selection in the A site and with the mRNA backbone. Located at the interface of the 30S and 50S subunits, it traverses the body of the 30S subunit contacting proteins on the other side and probably holding the rRNA structure together. The combined cluster of proteins S8, S12 and S17 appears to hold together the shoulder and platform of the 30S subunit. In Porphyromonas gingivalis (strain ATCC BAA-308 / W83), this protein is Small ribosomal subunit protein uS12.